A 221-amino-acid polypeptide reads, in one-letter code: Ras-related protein Rab-28 (221 aa).

Serine 2 carries the N-acetylserine modification. Phosphoserine is present on serine 8. Residues glycine 21, glycine 24, lysine 25, threonine 26, serine 27, glycine 38, lysine 39, tyrosine 41, and threonine 44 each contribute to the GTP site. A Mg(2+)-binding site is contributed by threonine 26. The interval 35-49 (ETFGKRYKQTIGLDF) is switch I. Mg(2+)-binding residues include threonine 44 and aspartate 68. The tract at residues 68–85 (DIGGQTIGGKMLDKYIYG) is switch II. GTP is bound by residues glycine 71, asparagine 129, lysine 130, aspartate 132, alanine 160, and lysine 161. A Cysteine methyl ester modification is found at cysteine 218. Cysteine 218 is lipidated: S-farnesyl cysteine. A propeptide spans 219–221 (AVQ) (removed in mature form).

It belongs to the small GTPase superfamily. Rab family. In terms of assembly, interacts (prenylated form) with PDE6D; the interaction promotes RAB28 delivery to the photoreceptor outer segments. Interacts with KCNJ13; the interaction may facilitate cone outer segments phagocytosis. Also participates in nuclear factor kappa-B p65/RELA nuclear transport in endothelial cells. Mg(2+) is required as a cofactor. In terms of processing, isoprenylated.

Its subcellular location is the cell membrane. The protein localises to the cytoplasm. It localises to the cytoskeleton. The protein resides in the cilium basal body. It is found in the nucleus. The enzyme catalyses GTP + H2O = GDP + phosphate + H(+). With respect to regulation, regulated by guanine nucleotide exchange factors (GEFs) which promote the exchange of bound GDP for free GTP. Regulated by GTPase activating proteins (GAPs) which increase the GTP hydrolysis activity. Inhibited by GDP dissociation inhibitors (GDIs). Its function is as follows. The small GTPases Rab are key regulators of intracellular membrane trafficking, from the formation of transport vesicles to their fusion with membranes. Rabs cycle between an inactive GDP-bound form and an active GTP-bound form that is able to recruit to membranes different sets of downstream effectors directly responsible for vesicle formation, movement, tethering and fusion. RAB28 is required for shedding and phagocytosis of cone cell outer segments (OS) discs in the retina. Also participates in nuclear factor kappa-B p65/RELA nuclear transport in endothelial cells. This Pongo abelii (Sumatran orangutan) protein is Ras-related protein Rab-28 (RAB28).